A 316-amino-acid chain; its full sequence is Thiamine-monophosphate kinase (316 aa).

Residues aspartate 26, threonine 49, and aspartate 50 each coordinate Mg(2+). Aspartate 57 lines the substrate pocket. Aspartate 79 contributes to the Mg(2+) binding site. Residues tyrosine 109, 126–127, and arginine 151 contribute to the ATP site; that span reads GD. Mg(2+) is bound at residue aspartate 127. Residue aspartate 198 participates in Mg(2+) binding. Serine 200 is a binding site for ATP. Aspartate 201 is a binding site for Mg(2+). Residues glutamate 251 and phenylalanine 305 each contribute to the substrate site.

The protein belongs to the thiamine-monophosphate kinase family.

The catalysed reaction is thiamine phosphate + ATP = thiamine diphosphate + ADP. The protein operates within cofactor biosynthesis; thiamine diphosphate biosynthesis; thiamine diphosphate from thiamine phosphate: step 1/1. In terms of biological role, catalyzes the ATP-dependent phosphorylation of thiamine-monophosphate (TMP) to form thiamine-pyrophosphate (TPP), the active form of vitamin B1. The protein is Thiamine-monophosphate kinase of Rhodopirellula baltica (strain DSM 10527 / NCIMB 13988 / SH1).